The primary structure comprises 278 residues: Putative transposase for insertion sequence element IS986/IS6110 (278 aa).

The region spanning 101 to 268 (GPPAPNRLWV…VPPVELEAAY (168 aa)) is the Integrase catalytic domain.

In terms of biological role, involved in the transposition of the insertion sequence. This is Putative transposase for insertion sequence element IS986/IS6110 from Mycobacterium tuberculosis (strain CDC 1551 / Oshkosh).